We begin with the raw amino-acid sequence, 220 residues long: Deoxyribose-phosphate aldolase 1 (220 aa).

Aspartate 89 serves as the catalytic Proton donor/acceptor. Catalysis depends on lysine 151, which acts as the Schiff-base intermediate with acetaldehyde. The active-site Proton donor/acceptor is lysine 180.

Belongs to the DeoC/FbaB aldolase family. DeoC type 1 subfamily.

The protein localises to the cytoplasm. The enzyme catalyses 2-deoxy-D-ribose 5-phosphate = D-glyceraldehyde 3-phosphate + acetaldehyde. The protein operates within carbohydrate degradation; 2-deoxy-D-ribose 1-phosphate degradation; D-glyceraldehyde 3-phosphate and acetaldehyde from 2-deoxy-alpha-D-ribose 1-phosphate: step 2/2. Its function is as follows. Catalyzes a reversible aldol reaction between acetaldehyde and D-glyceraldehyde 3-phosphate to generate 2-deoxy-D-ribose 5-phosphate. This chain is Deoxyribose-phosphate aldolase 1, found in Staphylococcus aureus (strain MRSA252).